The primary structure comprises 146 residues: Snaclec 4 (146 aa).

The N-terminal stretch at 1-23 (MGRFISISFGLLVVFLSLSGTEA) is a signal peptide. Disulfide bonds link C27/C38, C55/C144, and C121/C136. The C-type lectin domain maps to 34-145 (YDQNCYKVFT…CNFIAPVVCK (112 aa)).

This sequence belongs to the snaclec family. Heterodimer; disulfide-linked.

The protein resides in the secreted. In terms of biological role, interferes with one step of hemostasis (modulation of platelet aggregation, or coagulation cascade, for example). This chain is Snaclec 4, found in Daboia siamensis (Eastern Russel's viper).